A 1138-amino-acid chain; its full sequence is Exportin-6-B (1138 aa).

An Importin N-terminal domain is found at 31–97 (IESLLNNFAQ…RSSLPKLLLS (67 aa)). Positions 291 to 307 (SVTTNTTSSVVNGGSSS) are enriched in low complexity. The interval 291–315 (SVTTNTTSSVVNGGSSSPPLHSAAP) is disordered.

Belongs to the exportin family.

It localises to the nucleus. It is found in the cytoplasm. Its function is as follows. Mediates the nuclear export of actin and profilin-actin complexes in somatic cells. Oocyte nuclei lack active actin export. Mediates the nuclear export of actin and profilin-actin complexes in somatic cells. This Xenopus laevis (African clawed frog) protein is Exportin-6-B (xpo6-b).